The chain runs to 319 residues: MDLNCLDFEQPILKIESKIHSLMKLIHHDKKLAINIYEKINHLKQKSVELTQKIFSNLSAWQIAQLARHPYRPYTLDYIAYIFDDFDELSGDRVYGDDKAIVGGIGRLNSRPVMVIGHQKGRDIQEKIRRNFGMSAPEGYRKALRLMKLAERFNLPIFTFIDTPGAYPGIGAEKRGQSIAIAKNLRAMTTLNIPIICTVIGEGGSGGALAISVGDKINMLQYSIYSVISPEGCASILWKNVQKAPLAAEVMGITAHRLKQLKLIDTVIPEPLGGAHRDIVSTSISIKTQLLLDLVELDALQEEKLLTRRYQKFMNYGYC.

Positions 43–296 constitute a CoA carboxyltransferase C-terminal domain; that stretch reads LKQKSVELTQ…KTQLLLDLVE (254 aa).

The protein belongs to the AccA family. Acetyl-CoA carboxylase is a heterohexamer composed of biotin carboxyl carrier protein (AccB), biotin carboxylase (AccC) and two subunits each of ACCase subunit alpha (AccA) and ACCase subunit beta (AccD).

Its subcellular location is the cytoplasm. The catalysed reaction is N(6)-carboxybiotinyl-L-lysyl-[protein] + acetyl-CoA = N(6)-biotinyl-L-lysyl-[protein] + malonyl-CoA. It participates in lipid metabolism; malonyl-CoA biosynthesis; malonyl-CoA from acetyl-CoA: step 1/1. In terms of biological role, component of the acetyl coenzyme A carboxylase (ACC) complex. First, biotin carboxylase catalyzes the carboxylation of biotin on its carrier protein (BCCP) and then the CO(2) group is transferred by the carboxyltransferase to acetyl-CoA to form malonyl-CoA. This chain is Acetyl-coenzyme A carboxylase carboxyl transferase subunit alpha, found in Blochmanniella floridana.